The chain runs to 309 residues: Minor serine/threonine-protein phosphatase PP2A-1 catalytic subunit (309 aa).

D57, H59, D85, and N117 together coordinate Mn(2+). The active-site Proton donor is the H118. Mn(2+) is bound by residues H167 and H241. Position 309 is a leucine methyl ester (L309).

This sequence belongs to the PPP phosphatase family. PP-2A subfamily. It depends on Mn(2+) as a cofactor.

It catalyses the reaction O-phospho-L-seryl-[protein] + H2O = L-seryl-[protein] + phosphate. It carries out the reaction O-phospho-L-threonyl-[protein] + H2O = L-threonyl-[protein] + phosphate. In terms of biological role, essential role in cell cycle control. PP2A may be involved in controlling the entry into mitosis, possibly acting as an inhibitor. In Schizosaccharomyces pombe (strain 972 / ATCC 24843) (Fission yeast), this protein is Minor serine/threonine-protein phosphatase PP2A-1 catalytic subunit (ppa1).